Here is a 161-residue protein sequence, read N- to C-terminus: Large ribosomal subunit protein uL15 (161 aa).

The tract at residues 1-41 is disordered; it reads MTKLNELAPAPGSTKGRMRVGRGPGSGKGKTAGRGVKGQKA. Residues 22–36 are compositionally biased toward gly residues; sequence RGPGSGKGKTAGRGV.

Belongs to the universal ribosomal protein uL15 family. Part of the 50S ribosomal subunit.

Binds to the 23S rRNA. The sequence is that of Large ribosomal subunit protein uL15 from Caulobacter sp. (strain K31).